Here is a 285-residue protein sequence, read N- to C-terminus: 4-diphosphocytidyl-2-C-methyl-D-erythritol kinase (285 aa).

Residue lysine 12 is part of the active site. 95 to 105 (PVGAGLAGGST) lines the ATP pocket. Aspartate 137 is an active-site residue.

The protein belongs to the GHMP kinase family. IspE subfamily.

It catalyses the reaction 4-CDP-2-C-methyl-D-erythritol + ATP = 4-CDP-2-C-methyl-D-erythritol 2-phosphate + ADP + H(+). The protein operates within isoprenoid biosynthesis; isopentenyl diphosphate biosynthesis via DXP pathway; isopentenyl diphosphate from 1-deoxy-D-xylulose 5-phosphate: step 3/6. Its function is as follows. Catalyzes the phosphorylation of the position 2 hydroxy group of 4-diphosphocytidyl-2C-methyl-D-erythritol. In Syntrophomonas wolfei subsp. wolfei (strain DSM 2245B / Goettingen), this protein is 4-diphosphocytidyl-2-C-methyl-D-erythritol kinase.